Here is a 404-residue protein sequence, read N- to C-terminus: Tryptophan synthase beta chain (404 aa).

Position 94 is an N6-(pyridoxal phosphate)lysine (Lys-94).

This sequence belongs to the TrpB family. As to quaternary structure, tetramer of two alpha and two beta chains. Pyridoxal 5'-phosphate is required as a cofactor.

It carries out the reaction (1S,2R)-1-C-(indol-3-yl)glycerol 3-phosphate + L-serine = D-glyceraldehyde 3-phosphate + L-tryptophan + H2O. It participates in amino-acid biosynthesis; L-tryptophan biosynthesis; L-tryptophan from chorismate: step 5/5. The beta subunit is responsible for the synthesis of L-tryptophan from indole and L-serine. The protein is Tryptophan synthase beta chain of Staphylococcus aureus (strain bovine RF122 / ET3-1).